The following is a 953-amino-acid chain: 26S proteasome non-ATPase regulatory subunit 1 (953 aa).

Residue Met1 is modified to N-acetylmethionine; partial. At Thr273 the chain carries Phosphothreonine. Residues 279-318 (PGSTNTGTVPGSEKDSDSMETEEKTGSAFVGKTPEASPEP) are disordered. A Phosphoserine modification is found at Ser290. Over residues 290–303 (SEKDSDSMETEEKT) the composition is skewed to basic and acidic residues. Lys310 is modified (N6-acetyllysine). Phosphothreonine is present on Thr311. Ser315 bears the Phosphoserine mark. PC repeat units lie at residues 403-436 (TATASLGVIHKGHEKEALQLMATYLPKDTSPGSA), 441-474 (GGLYALGLIHANHGGDIIDYLLNQLKNASNDIVR), 476-510 (GGSLGLGLAAMGTARQDVYDLLKTNLYQDDAVTGE), 511-545 (AAGLALGLVMLGSKNAQAIEDMVGYAQETQHEKIL), 547-580 (GLAVGIALVMYGRMEEADALIESLCRDKDPILRR), 581-616 (SGMYTVAMAYCGSGNNKAIRRLLHVAVSDVNDDVRR), 617-649 (AAVESLGFILFRTPEQCPSVVSLLSESYNPHVR), 651-685 (GAAMALGICCAGTGNKEAINLLEPMTNDPVNYVRQ), 686-726 (GALI…DVMA), and 729-761 (GAILAQGILDAGGHNVTISLQSRTGHTHMPSVV). The residue at position 720 (Lys720) is an N6-acetyllysine. The residue at position 830 (Thr830) is a Phosphothreonine. Ser834 is subject to Phosphoserine. Disordered stretches follow at residues 839-881 (AKKK…LDNP) and 930-953 (AHGPKIEEEEQEPEPPEPFEYIDD). Basic and acidic residues-rich tracts occupy residues 842–852 (KEKEKEKKEEE) and 859–872 (AEKKEEKEKKKEPE). A compositionally biased stretch (acidic residues) spans 936-953 (EEEEQEPEPPEPFEYIDD).

It belongs to the proteasome subunit S1 family. In terms of assembly, component of the 19S proteasome regulatory particle complex. The 26S proteasome consists of a 20S core particle (CP) and two 19S regulatory subunits (RP). The regulatory particle is made of a lid composed of 9 subunits, a base containing 6 ATPases and few additional components including PSMD1. Interacts with ADRM1. Interacts with ZFAND1.

Its function is as follows. Component of the 26S proteasome, a multiprotein complex involved in the ATP-dependent degradation of ubiquitinated proteins. This complex plays a key role in the maintenance of protein homeostasis by removing misfolded or damaged proteins, which could impair cellular functions, and by removing proteins whose functions are no longer required. Therefore, the proteasome participates in numerous cellular processes, including cell cycle progression, apoptosis, or DNA damage repair. This chain is 26S proteasome non-ATPase regulatory subunit 1 (PSMD1), found in Pongo abelii (Sumatran orangutan).